The following is a 273-amino-acid chain: Phosphate import ATP-binding protein PstB (273 aa).

Residues 19–258 (LSLQNVTISY…FNDTDKIFNA (240 aa)) enclose the ABC transporter domain. ATP is bound at residue 51–58 (GPSGCGKS).

It belongs to the ABC transporter superfamily. Phosphate importer (TC 3.A.1.7) family. As to quaternary structure, the complex is composed of two ATP-binding proteins (PstB), two transmembrane proteins (PstC and PstA) and a solute-binding protein (PstS).

The protein localises to the cell inner membrane. It catalyses the reaction phosphate(out) + ATP + H2O = ADP + 2 phosphate(in) + H(+). Its function is as follows. Part of the ABC transporter complex PstSACB involved in phosphate import. Responsible for energy coupling to the transport system. This chain is Phosphate import ATP-binding protein PstB, found in Synechococcus sp. (strain CC9605).